Here is a 31-residue protein sequence, read N- to C-terminus: Cytochrome b6-f complex subunit 6 (31 aa).

Residues 4 to 26 (ITSYFGFLLAALTITPALLISLN) traverse the membrane as a helical segment.

It belongs to the PetL family. The 4 large subunits of the cytochrome b6-f complex are cytochrome b6, subunit IV (17 kDa polypeptide, PetD), cytochrome f and the Rieske protein, while the 4 small subunits are PetG, PetL, PetM and PetN. The complex functions as a dimer.

It is found in the plastid. Its subcellular location is the chloroplast thylakoid membrane. Component of the cytochrome b6-f complex, which mediates electron transfer between photosystem II (PSII) and photosystem I (PSI), cyclic electron flow around PSI, and state transitions. PetL is important for photoautotrophic growth as well as for electron transfer efficiency and stability of the cytochrome b6-f complex. The sequence is that of Cytochrome b6-f complex subunit 6 from Dioscorea elephantipes (Elephant's foot yam).